The chain runs to 1373 residues: MVSLRDNIEAQPLSHNRRIRKNFGHINLVADIPNLIEIQKNSYEKNFLQLNIKDSERKNKGLQSILNSIFPISDSSNIANLEFVKYEFDTPKYDVEECSQRSLSYAAPLKVTLRLSIWDIDEDTGTREIKGIKEQEVYMGDIPLMTKNGTFIINGTERVVVSQMHRSPGVFFYHDEGKVHSSGKLLYSARVIPYRGSWLDLEFDAKDVIYFRIDRKRKLYATTLLRAIGMSTEEIIKFYYNSVTYKLVKNKGWAVKFIPQHITAHRLTSDLVDADTGNVLLKAGQKITPRLAKKYFGEGLNNILVAHETLIGKYLSEDLRDPASDEVLAKIGEMITSDMLNVINDLKIKNVNVLVINPQSGPYIRNTLFADKNQDREAALCDIFRVLRPGEPANIEAAENLFYNLFFDAERYDLSEVGRIKMNSRLELNISEEVTVLTIDDIKNIVRVLVELKDGKGIIDDIDHLGNRRVRSVGELIENQFRIGLVRMEKSVIERMSAGDVDTVMPHDLVNSKILVSVVKEFFSTSQLSQFMDQTNPLSEITHKRRLSALGPGGLSRDRAGFEVRDVHPTHYGRICPIETPEGQNIGLINSMATYARINKHGFIESPYRRVKDRHVTDEVVYLSAIEEGKYKIGQANSKVDKDGKLQGEFINCRVEGGNFVMVEPQEVDFIDVTPMQVVSVAASLIPFLENDDANRALMGSNMQRQAVPLIKTDAPFVGTGVEGVVAKDSGASVLALHDGIVEQVDSNRIVIRTLEQKIDGSPSVDIYNLLKFQKSNHNTCINQKPLVKVGHYVKKNDIIADGPSTDNGEIALGRNVLVAFLPWNGYNFEDSILISERIVKEDVFTSIHIEEFEVIARDTRLGPEEITRDIPNVSEEALRHLDEVGIIYVGAEVKAGDILVGKVTPKSESPITPEEKLLRAIFGEKAFDVKDSSLHVPSGVSGTVVEVRVFSRRGVEKDQRAIAIEKQQIEKLAKDRDDELEIIEHFVFSWLEKLLIGQVIVNGPKQVKAGQTITSEMLKGLSKGQFWQLTVEDANVMNEIEQIKVHYDEKKDALDKRFATKVEKLQSGDDLPQGALKVVKVFIATKHKLQPGDKMAGRHGNKGVISRIVPEEDMPFLEDGTVVDIVLNPLGLPSRMNIGQILETHLGWASINLAKKISTLVKEYKNKHIGIEQIKKFLLELYGENINYILERSEEEIISFCNKVSKGVHFATPVFDGAKVQDVKDMLKLAGQDPSGQVKLIDGRTGEYFDRLVTVGQKYLLKLHHLVDNKIHSRSIGPYSLVTQQPLGGKSHFGGQRFGEMECWALQAYGAAYTLQEMLTVKSDDVNGRIKTYDSIVRGENNFESGIPESFNVMIKEFRSLCLNVKLEVTSS.

This sequence belongs to the RNA polymerase beta chain family. In terms of assembly, the RNAP catalytic core consists of 2 alpha, 1 beta, 1 beta' and 1 omega subunit. When a sigma factor is associated with the core the holoenzyme is formed, which can initiate transcription.

It carries out the reaction RNA(n) + a ribonucleoside 5'-triphosphate = RNA(n+1) + diphosphate. Its function is as follows. DNA-dependent RNA polymerase catalyzes the transcription of DNA into RNA using the four ribonucleoside triphosphates as substrates. The protein is DNA-directed RNA polymerase subunit beta of Rickettsia felis (strain ATCC VR-1525 / URRWXCal2) (Rickettsia azadi).